Consider the following 389-residue polypeptide: 26S proteasome regulatory subunit 10B (389 aa).

K72 is modified (N6-acetyllysine). 174–181 is an ATP binding site; the sequence is GPPGTGKT. N6-acetyllysine is present on K206. S244 carries the post-translational modification Phosphoserine.

This sequence belongs to the AAA ATPase family. As to quaternary structure, component of the 19S proteasome regulatory particle complex. The 26S proteasome consists of a 20S core particle (CP) and two 19S regulatory subunits (RP). The regulatory particle is made of a lid composed of 9 subunits, a base containing 6 ATPases including PSMC6 and few additional components. Interacts with PAAF1.

It localises to the cytoplasm. The protein localises to the nucleus. Component of the 26S proteasome, a multiprotein complex involved in the ATP-dependent degradation of ubiquitinated proteins. This complex plays a key role in the maintenance of protein homeostasis by removing misfolded or damaged proteins, which could impair cellular functions, and by removing proteins whose functions are no longer required. Therefore, the proteasome participates in numerous cellular processes, including cell cycle progression, apoptosis, or DNA damage repair. PSMC6 belongs to the heterohexameric ring of AAA (ATPases associated with diverse cellular activities) proteins that unfolds ubiquitinated target proteins that are concurrently translocated into a proteolytic chamber and degraded into peptides. The chain is 26S proteasome regulatory subunit 10B (PSMC6) from Homo sapiens (Human).